Reading from the N-terminus, the 469-residue chain is Probable monogalactosyldiacylglycerol synthase 2, chloroplastic (469 aa).

The transit peptide at 1-42 (MVISVATPRRSIRDAVLGGVLGAGGRQLYQPLRCAFYDGAAG) directs the protein to the chloroplast.

Belongs to the glycosyltransferase 28 family.

The protein localises to the plastid. Its subcellular location is the chloroplast membrane. It carries out the reaction a 1,2-diacyl-sn-glycerol + UDP-alpha-D-galactose = a 1,2-diacyl-3-O-(beta-D-galactosyl)-sn-glycerol + UDP + H(+). Involved in the synthesis of the major structural component of photosynthetic membranes. This is Probable monogalactosyldiacylglycerol synthase 2, chloroplastic (MGD2) from Oryza sativa subsp. indica (Rice).